A 306-amino-acid polypeptide reads, in one-letter code: Recombination-associated protein RdgC (306 aa).

Belongs to the RdgC family.

Its subcellular location is the cytoplasm. The protein localises to the nucleoid. Functionally, may be involved in recombination. The protein is Recombination-associated protein RdgC of Pseudomonas entomophila (strain L48).